A 192-amino-acid polypeptide reads, in one-letter code: Probable GTP-binding protein EngB (192 aa).

An EngB-type G domain is found at 22–192; that stretch reads GRPEIVFVGR…LLERLDLFSQ (171 aa). GTP is bound by residues 30–37, 57–61, 75–78, 142–145, and 172–174; these read GRSNVGKS, GKTRL, DLPG, TKWD, and YSS. Mg(2+)-binding residues include S37 and T59.

It belongs to the TRAFAC class TrmE-Era-EngA-EngB-Septin-like GTPase superfamily. EngB GTPase family. Requires Mg(2+) as cofactor.

In terms of biological role, necessary for normal cell division and for the maintenance of normal septation. The chain is Probable GTP-binding protein EngB from Chlorobaculum parvum (strain DSM 263 / NCIMB 8327) (Chlorobium vibrioforme subsp. thiosulfatophilum).